The sequence spans 425 residues: Cytokine receptor-like factor 1 (425 aa).

The N-terminal stretch at 1–33 (MPAGRPGPVAQSARRPPRPLSSLWSPLLLCVLG) is a signal peptide. The region spanning 35-134 (PRGGSGAHTA…SILAGSCLYV (100 aa)) is the Ig-like C2-type domain. N-linked (GlcNAc...) asparagine glycosylation is found at Asn-95, Asn-107, and Asn-143. 2 Fibronectin type-III domains span residues 140 to 235 (KPFN…VLDV) and 240 to 344 (PPPD…TPRS). The cysteines at positions 146 and 156 are disulfide-linked. Asn-171 carries N-linked (GlcNAc...) asparagine glycosylation. Cys-187 and Cys-198 form a disulfide bridge. Residue Ser-222 is modified to Phosphoserine. A glycan (N-linked (GlcNAc...) asparagine) is linked at Asn-295. The short motif at 330–334 (WSEWS) is the WSXWS motif element. The disordered stretch occupies residues 335–366 (HPTAASTPRSERPGPGGGVCEPRGGEPSSGPV). Asn-385 carries N-linked (GlcNAc...) asparagine glycosylation. The segment at 402–425 (HKTRNQDEGILPSGRRGAARGPAG) is disordered. Positions 415–425 (GRRGAARGPAG) are enriched in low complexity.

It belongs to the type I cytokine receptor family. Type 3 subfamily. Forms covalent di- and tetramers. Forms a heteromeric complex with cardiotrophin-like cytokine CLCF1/CLC; the CRLF1-CLCF1 complex is a ligand for the ciliary neurotrophic factor receptor/CNTFR. The CRLF1-CLCF1 heterodimer, as well as tripartite signaling complex formed by CRLF1, CLCF1 and CNTFR bind SORL1 (via N-terminal ectodomain); within this complex, the interaction is mediated predominantly by the CRLF1 moiety. In terms of tissue distribution, widely expressed in the embryo. Not detected in the brain of adult mice.

The protein localises to the secreted. Functionally, in complex with CLCF1, forms a heterodimeric neurotropic cytokine that plays a crucial role during neuronal development. Plays a role in the initiation and/or maintenance of suckling in neonatal mice. May also play a regulatory role in the immune system. The protein is Cytokine receptor-like factor 1 (Crlf1) of Mus musculus (Mouse).